The following is a 265-amino-acid chain: 4-hydroxy-tetrahydrodipicolinate reductase (265 aa).

NAD(+) contacts are provided by residues 7–12 (GASGRM), Asp33, 96–98 (GTT), and 120–123 (AANM). Catalysis depends on His153, which acts as the Proton donor/acceptor. His154 contributes to the (S)-2,3,4,5-tetrahydrodipicolinate binding site. Lys157 functions as the Proton donor in the catalytic mechanism. 163–164 (GT) provides a ligand contact to (S)-2,3,4,5-tetrahydrodipicolinate.

Belongs to the DapB family.

Its subcellular location is the cytoplasm. It carries out the reaction (S)-2,3,4,5-tetrahydrodipicolinate + NAD(+) + H2O = (2S,4S)-4-hydroxy-2,3,4,5-tetrahydrodipicolinate + NADH + H(+). It catalyses the reaction (S)-2,3,4,5-tetrahydrodipicolinate + NADP(+) + H2O = (2S,4S)-4-hydroxy-2,3,4,5-tetrahydrodipicolinate + NADPH + H(+). It participates in amino-acid biosynthesis; L-lysine biosynthesis via DAP pathway; (S)-tetrahydrodipicolinate from L-aspartate: step 4/4. In terms of biological role, catalyzes the conversion of 4-hydroxy-tetrahydrodipicolinate (HTPA) to tetrahydrodipicolinate. The protein is 4-hydroxy-tetrahydrodipicolinate reductase of Cupriavidus metallidurans (strain ATCC 43123 / DSM 2839 / NBRC 102507 / CH34) (Ralstonia metallidurans).